Here is a 638-residue protein sequence, read N- to C-terminus: MTQLPKTPLLDQVTYPADLRKLEDRDLPQLAREVRDEMIDAVSRTGGHLGAGLGVVELTIAIHSVFDTPDDRLIFDVGHQCYPHKILTGRRDRIRTLRQEDGLSGFTRRAESEYDPFGAAHSSTSISAGLGMAIAADLDKNDRRVIAVIGDGAMSAGMAYEALNNAGALDARLIVILNDNDMSIAPPTGAMSAYLARLASGRTYMGFRDFGKKLTAYLGKNIDRAITRAVEHARGYVTGGTMFEEMGFYHIGPIDGHSFDHLLPVLRNVRDNARGPVLIHVVTQKGKGYPPAEAAADKYHGVNKFDVITGAQARVKPNAPSYTSVFAEALVQEATLDDKIVGITAAMPNGTGLDKLAEAFPSRCFDVGIAEQHAVTFAAGLAAEGYKPFAALYSTFLQRAYDQVVHDVAIQGLPVRFPIDRAGFVGADGPTHAGSFDTAFLTTLPGFVVMAAADEAELKHMVRTAVAYDAGPISFRYPRGEGVGVDMPVRGEILRIGKGRIVKEGTKVALLSFGTRLADCLLAAEDLDAAGLSTTVADARFAKPLDHDLIRQFARHHEMVITVEEGSVGGFGSQVMQYLSSEGLLDNGLKIRSLVMPDIWMEQAKPEAMNAHAGLDRAGIVSTVFRALGRGVAVGVAG.

Thiamine diphosphate-binding positions include histidine 79 and 120-122 (AHS). Mg(2+) is bound at residue aspartate 151. Thiamine diphosphate contacts are provided by residues 152–153 (GA), asparagine 180, tyrosine 289, and glutamate 371. Mg(2+) is bound at residue asparagine 180.

It belongs to the transketolase family. DXPS subfamily. In terms of assembly, homodimer. Mg(2+) serves as cofactor. It depends on thiamine diphosphate as a cofactor.

It carries out the reaction D-glyceraldehyde 3-phosphate + pyruvate + H(+) = 1-deoxy-D-xylulose 5-phosphate + CO2. The protein operates within metabolic intermediate biosynthesis; 1-deoxy-D-xylulose 5-phosphate biosynthesis; 1-deoxy-D-xylulose 5-phosphate from D-glyceraldehyde 3-phosphate and pyruvate: step 1/1. Its function is as follows. Catalyzes the acyloin condensation reaction between C atoms 2 and 3 of pyruvate and glyceraldehyde 3-phosphate to yield 1-deoxy-D-xylulose-5-phosphate (DXP). In Rhizobium leguminosarum bv. trifolii (strain WSM2304), this protein is 1-deoxy-D-xylulose-5-phosphate synthase.